We begin with the raw amino-acid sequence, 480 residues long: Trigger factor (480 aa).

Residues 169–264 (GDIAVVDFKG…LKELKEKELP (96 aa)) form the PPIase FKBP-type domain. A disordered region spans residues 441–480 (PEGSLSPAEETEAAESDADADVSQTEQENSEPSTTEVTEG). Positions 449-460 (EETEAAESDADA) are enriched in acidic residues. Polar residues predominate over residues 462–480 (VSQTEQENSEPSTTEVTEG).

Belongs to the FKBP-type PPIase family. Tig subfamily.

The protein resides in the cytoplasm. It carries out the reaction [protein]-peptidylproline (omega=180) = [protein]-peptidylproline (omega=0). In terms of biological role, involved in protein export. Acts as a chaperone by maintaining the newly synthesized protein in an open conformation. Functions as a peptidyl-prolyl cis-trans isomerase. The polypeptide is Trigger factor (Nostoc punctiforme (strain ATCC 29133 / PCC 73102)).